We begin with the raw amino-acid sequence, 227 residues long: UPF0758 protein lpp2553 (227 aa).

Residues R102–V225 form the MPN domain. Residues H173, H175, and D186 each contribute to the Zn(2+) site. Positions H173 to D186 match the JAMM motif motif.

This sequence belongs to the UPF0758 family.

The sequence is that of UPF0758 protein lpp2553 from Legionella pneumophila (strain Paris).